The chain runs to 261 residues: tRNA pseudouridine synthase A (261 aa).

The Nucleophile role is filled by D51. Y109 contacts substrate.

It belongs to the tRNA pseudouridine synthase TruA family. In terms of assembly, homodimer.

It catalyses the reaction uridine(38/39/40) in tRNA = pseudouridine(38/39/40) in tRNA. Functionally, formation of pseudouridine at positions 38, 39 and 40 in the anticodon stem and loop of transfer RNAs. In Haemophilus ducreyi (strain 35000HP / ATCC 700724), this protein is tRNA pseudouridine synthase A.